The primary structure comprises 458 residues: NADH-quinone oxidoreductase subunit N 1 (458 aa).

Helical transmembrane passes span 12 to 32 (ALIP…AGLL), 37 to 57 (EVLV…IPSF), 70 to 90 (FLTI…LLVL), 101 to 121 (FNES…LVSA), 124 to 144 (LISF…LVGI), 159 to 179 (FMLG…IYGA), 199 to 219 (ILIG…LVPF), 230 to 250 (APTP…LGAF), 266 to 286 (SNFL…FALI), 293 to 313 (MLAY…IVGT), 321 to 341 (VAYM…VIAF), 361 to 381 (IAML…GFIV), 393 to 413 (GFTW…YYYL), and 438 to 458 (VAIL…LFLI).

Belongs to the complex I subunit 2 family. NDH-1 is composed of 14 different subunits. Subunits NuoA, H, J, K, L, M, N constitute the membrane sector of the complex.

The protein localises to the cell inner membrane. The catalysed reaction is a quinone + NADH + 5 H(+)(in) = a quinol + NAD(+) + 4 H(+)(out). NDH-1 shuttles electrons from NADH, via FMN and iron-sulfur (Fe-S) centers, to quinones in the respiratory chain. The immediate electron acceptor for the enzyme in this species is believed to be ubiquinone. Couples the redox reaction to proton translocation (for every two electrons transferred, four hydrogen ions are translocated across the cytoplasmic membrane), and thus conserves the redox energy in a proton gradient. The protein is NADH-quinone oxidoreductase subunit N 1 of Thermodesulfovibrio yellowstonii (strain ATCC 51303 / DSM 11347 / YP87).